The sequence spans 157 residues: Transcriptional repressor NrdR (157 aa).

The segment at 3–34 (CPFCRHPDSRVVDSRTSDDGLSIRRRRQCPEC) is a zinc-finger region. The 91-residue stretch at 46-136 (LSVIKRNGVV…VYQGFDSLDD (91 aa)) folds into the ATP-cone domain.

This sequence belongs to the NrdR family. Requires Zn(2+) as cofactor.

Functionally, negatively regulates transcription of bacterial ribonucleotide reductase nrd genes and operons by binding to NrdR-boxes. The protein is Transcriptional repressor NrdR of Clavibacter michiganensis subsp. michiganensis (strain NCPPB 382).